The chain runs to 236 residues: 1-(5-phosphoribosyl)-5-[(5-phosphoribosylamino)methylideneamino] imidazole-4-carboxamide isomerase (236 aa).

Asp8 acts as the Proton acceptor in catalysis. Asp127 (proton donor) is an active-site residue.

It belongs to the HisA/HisF family.

It localises to the cytoplasm. It catalyses the reaction 1-(5-phospho-beta-D-ribosyl)-5-[(5-phospho-beta-D-ribosylamino)methylideneamino]imidazole-4-carboxamide = 5-[(5-phospho-1-deoxy-D-ribulos-1-ylimino)methylamino]-1-(5-phospho-beta-D-ribosyl)imidazole-4-carboxamide. It participates in amino-acid biosynthesis; L-histidine biosynthesis; L-histidine from 5-phospho-alpha-D-ribose 1-diphosphate: step 4/9. In Campylobacter hominis (strain ATCC BAA-381 / DSM 21671 / CCUG 45161 / LMG 19568 / NCTC 13146 / CH001A), this protein is 1-(5-phosphoribosyl)-5-[(5-phosphoribosylamino)methylideneamino] imidazole-4-carboxamide isomerase.